Consider the following 229-residue polypeptide: Orotidine 5'-phosphate decarboxylase (229 aa).

Residues aspartate 11, lysine 33, 60 to 69, threonine 119, arginine 180, glutamine 189, glycine 209, and arginine 210 each bind substrate; that span reads DLKFHDIPNT. Catalysis depends on lysine 62, which acts as the Proton donor.

It belongs to the OMP decarboxylase family. Type 1 subfamily. In terms of assembly, homodimer.

It carries out the reaction orotidine 5'-phosphate + H(+) = UMP + CO2. The protein operates within pyrimidine metabolism; UMP biosynthesis via de novo pathway; UMP from orotate: step 2/2. Its function is as follows. Catalyzes the decarboxylation of orotidine 5'-monophosphate (OMP) to uridine 5'-monophosphate (UMP). This chain is Orotidine 5'-phosphate decarboxylase, found in Dichelobacter nodosus (strain VCS1703A).